A 782-amino-acid polypeptide reads, in one-letter code: General transcription and DNA repair factor IIH helicase/translocase subunit XPB (782 aa).

Over residues 1-11 the composition is skewed to basic and acidic residues; the sequence is MGKRDRADRDK. Disordered stretches follow at residues 1 to 51 and 218 to 241; these read MGKR…ESGT and SAIS…PQGK. The short motif at 6–18 is the Nuclear localization signal element; sequence RADRDKKKSRKRH. The span at 21 to 30 shows a compositional bias: acidic residues; that stretch reads DEEDDEEDAP. The segment covering 218 to 236 has biased composition (polar residues); that stretch reads SAISKTAESSGGPSTSRVT. The 162-residue stretch at 327–488 folds into the Helicase ATP-binding domain; that stretch reads MFGNGRARSG…DLNFLIGPKL (162 aa). 340-347 contributes to the ATP binding site; that stretch reads LPCGAGKS. A DEVH box motif is present at residues 441–444; sequence DEVH. Positions 542–702 constitute a Helicase C-terminal domain; sequence RACQFLIKFH…LAGMEEEDLA (161 aa). Arg-642 and Arg-645 together coordinate ATP. Ser-686 is modified (phosphoserine). Ser-751 is subject to Phosphoserine; by CK2.

This sequence belongs to the helicase family. RAD25/XPB subfamily. As to quaternary structure, component of the 7-subunit TFIIH core complex composed of XPB/ERCC3, XPD/ERCC2, GTF2H1, GTF2H2, GTF2H3, GTF2H4 and GTF2H5, which is active in NER. The core complex associates with the 3-subunit CDK-activating kinase (CAK) module composed of CCNH/cyclin H, CDK7 and MNAT1 to form the 10-subunit holoenzyme (holo-TFIIH) active in transcription. Interacts with PUF60. Interacts with ATF7IP. Interacts with KAT2A; leading to KAT2A recruitment to promoters and acetylation of histones. Part of TBP-based Pol II pre-initiation complex (PIC), in which Pol II core assembles with general transcription factors and other specific initiation factors including GTF2E1, GTF2E2, GTF2F1, GTF2F2, TCEA1, ERCC2, ERCC3, GTF2H2, GTF2H3, GTF2H4, GTF2H5, GTF2A1, GTF2A2, GTF2B and TBP; this large multi-subunit PIC complex mediates DNA unwinding and targets Pol II core to the transcription start site where the first phosphodiester bond forms. (Microbial infection) Interacts with Epstein-Barr virus EBNA2. Post-translationally, phosphorylation on Ser-751 by CK2 controls the 5'-excision activity of ERCC1-XPF endonuclease; phosphorylated protein inhibits the excision activity and thus NER. Dephosphorylation reactivates the 5'-excision step. Phosphorylation has no effect on transcription or the 3'-5' helicase activity.

The protein resides in the nucleus. The enzyme catalyses Couples ATP hydrolysis with the unwinding of duplex DNA by translocating in the 3'-5' direction.. The catalysed reaction is ATP + H2O = ADP + phosphate + H(+). Phosphorylation on Ser-751 by CK2 controls the 5'-excision activity of ERCC1-XPF endonuclease; phosphorylated protein inhibits the excision activity and thus NER. ATPase activity is stimulated by TFIIH subunit p52 (GTF2H4). DNA translocase activity by this subunit in TFIIH is stimulated by XPA, ERCC5/XPG and XFP plus ERCC1; translocase activity is sensitive to triptolide which targets this enzyme. Its function is as follows. ATP-dependent 3'-5' DNA helicase/translocase. Binds dsDNA rather than ssDNA, unzipping it in a translocase rather than classical helicase activity. Component of the general transcription and DNA repair factor IIH (TFIIH) core complex. When complexed to CDK-activating kinase (CAK), involved in RNA transcription by RNA polymerase II. The ATPase activity of XPB/ERCC3, but not its helicase activity, is required for DNA opening; it may wrap around the damaged DNA wedging it open, causing localized melting that allows XPD/ERCC2 helicase to anchor. In transcription, TFIIH has an essential role in transcription initiation. When the pre-initiation complex (PIC) has been established, TFIIH is required for promoter opening and promoter escape. The ATP-dependent helicase activity of XPB/ERCC3 is required for promoter opening and promoter escape. In transcription pre-initiation complexes induces and propagates a DNA twist to open DNA. Also involved in transcription-coupled nucleotide excision repair (NER) of damaged DNA. In NER, TFIIH acts by opening DNA around the lesion to allow the excision of the damaged oligonucleotide and its replacement by a new DNA fragment. The structure of the TFIIH transcription complex differs from the NER-TFIIH complex; large movements by XPD/ERCC2 and XPB/ERCC3 are stabilized by XPA. XPA retains XPB/ERCC3 at the 5' end of a DNA bubble (mimicking DNA damage). This Homo sapiens (Human) protein is General transcription and DNA repair factor IIH helicase/translocase subunit XPB.